Consider the following 158-residue polypeptide: Glutamyl-tRNA(Gln) amidotransferase subunit C, mitochondrial (158 aa).

It belongs to the GatC family. Subunit of the heterotrimeric GatCAB amidotransferase (AdT) complex, composed of A, B and C subunits.

The protein resides in the mitochondrion. It catalyses the reaction L-glutamyl-tRNA(Gln) + L-glutamine + ATP + H2O = L-glutaminyl-tRNA(Gln) + L-glutamate + ADP + phosphate + H(+). Functionally, allows the formation of correctly charged Gln-tRNA(Gln) through the transamidation of misacylated Glu-tRNA(Gln) in the mitochondria. The reaction takes place in the presence of glutamine and ATP through an activated gamma-phospho-Glu-tRNA(Gln). This is Glutamyl-tRNA(Gln) amidotransferase subunit C, mitochondrial from Drosophila grimshawi (Hawaiian fruit fly).